The primary structure comprises 164 residues: uncharacterized protein (164 aa).

2 CBS domains span residues 9–66 and 72–128; these read ATTK…DIDS and MTKD…VHTM.

This is an uncharacterized protein from Acidianus ambivalens (Desulfurolobus ambivalens).